A 162-amino-acid chain; its full sequence is NADH-quinone oxidoreductase subunit I (162 aa).

4Fe-4S ferredoxin-type domains lie at 53–83 (LRRY…IEAE) and 93–122 (TRYD…EGPN). Cysteine 63, cysteine 66, cysteine 69, cysteine 73, cysteine 102, cysteine 105, cysteine 108, and cysteine 112 together coordinate [4Fe-4S] cluster.

It belongs to the complex I 23 kDa subunit family. In terms of assembly, NDH-1 is composed of 14 different subunits. Subunits NuoA, H, J, K, L, M, N constitute the membrane sector of the complex. Requires [4Fe-4S] cluster as cofactor.

Its subcellular location is the cell inner membrane. It carries out the reaction a quinone + NADH + 5 H(+)(in) = a quinol + NAD(+) + 4 H(+)(out). In terms of biological role, NDH-1 shuttles electrons from NADH, via FMN and iron-sulfur (Fe-S) centers, to quinones in the respiratory chain. The immediate electron acceptor for the enzyme in this species is believed to be ubiquinone. Couples the redox reaction to proton translocation (for every two electrons transferred, four hydrogen ions are translocated across the cytoplasmic membrane), and thus conserves the redox energy in a proton gradient. This is NADH-quinone oxidoreductase subunit I from Rhodospirillum rubrum (strain ATCC 11170 / ATH 1.1.1 / DSM 467 / LMG 4362 / NCIMB 8255 / S1).